A 301-amino-acid chain; its full sequence is N-acetylmuramic acid 6-phosphate etherase (301 aa).

Residues 57-220 enclose the SIS domain; that stretch reads TYEKMLFGGR…STSLMIKKGK (164 aa). Glu85 (proton donor) is an active-site residue. Residue Glu116 is part of the active site.

This sequence belongs to the GCKR-like family. MurNAc-6-P etherase subfamily. Homodimer.

The enzyme catalyses N-acetyl-D-muramate 6-phosphate + H2O = N-acetyl-D-glucosamine 6-phosphate + (R)-lactate. It functions in the pathway amino-sugar metabolism; N-acetylmuramate degradation. Functionally, specifically catalyzes the cleavage of the D-lactyl ether substituent of MurNAc 6-phosphate, producing GlcNAc 6-phosphate and D-lactate. The sequence is that of N-acetylmuramic acid 6-phosphate etherase from Clostridium botulinum (strain Eklund 17B / Type B).